The primary structure comprises 325 residues: GMP reductase (325 aa).

Cysteine 173 acts as the Thioimidate intermediate in catalysis. 202-225 contacts NADP(+); it reads IIADGGIRHHGDIAKSVRFGAAMV.

This sequence belongs to the IMPDH/GMPR family. GuaC type 2 subfamily.

The enzyme catalyses IMP + NH4(+) + NADP(+) = GMP + NADPH + 2 H(+). Catalyzes the irreversible NADPH-dependent deamination of GMP to IMP. It functions in the conversion of nucleobase, nucleoside and nucleotide derivatives of G to A nucleotides, and in maintaining the intracellular balance of A and G nucleotides. In Leptothrix cholodnii (strain ATCC 51168 / LMG 8142 / SP-6) (Leptothrix discophora (strain SP-6)), this protein is GMP reductase.